The following is a 400-amino-acid chain: Plasminogen activator inhibitor 1 (400 aa).

The first 21 residues, 1–21, serve as a signal peptide directing secretion; sequence MQMSTVCLALGLALVFGEASA. N-linked (GlcNAc...) asparagine glycosylation is found at asparagine 230, asparagine 286, and asparagine 350.

This sequence belongs to the serpin family. Forms a heterodimer with TMPRSS7. Interacts with VTN. Binds LRP1B; binding is followed by internalization and degradation. Interacts with PPP1CB. In complex with PLAU/uPA, interacts with PLAUR/uPAR. Interacts with SORL1 and LRP1, either alone or in complex with PLAU; these interactions are abolished in the presence of LRPAP1/RAP. The ternary complex composed of PLAUR-PLAU-PAI1 also interacts with SORL1. Interacts with PLAT/tPA. Also interacts with SORL1, when complexed to PLAT/tPA.

The protein resides in the secreted. Serine protease inhibitor. Inhibits TMPRSS7. Is a primary inhibitor of tissue-type plasminogen activator (PLAT) and urokinase-type plasminogen activator (PLAU). As PLAT inhibitor, it is required for fibrinolysis down-regulation and is responsible for the controlled degradation of blood clots. As PLAU inhibitor, it is involved in the regulation of cell adhesion and spreading. Acts as a regulator of cell migration, independently of its role as protease inhibitor. It is required for stimulation of keratinocyte migration during cutaneous injury repair. It is involved in cellular and replicative senescence. Plays a role in alveolar type 2 cells senescence in the lung. Is involved in the regulation of cementogenic differentiation of periodontal ligament stem cells, and regulates odontoblast differentiation and dentin formation during odontogenesis. This Neovison vison (American mink) protein is Plasminogen activator inhibitor 1 (SERPINE1).